A 104-amino-acid polypeptide reads, in one-letter code: Large ribosomal subunit protein bL21 (104 aa).

This sequence belongs to the bacterial ribosomal protein bL21 family. Part of the 50S ribosomal subunit. Contacts protein L20.

This protein binds to 23S rRNA in the presence of protein L20. The polypeptide is Large ribosomal subunit protein bL21 (Clostridium tetani (strain Massachusetts / E88)).